Consider the following 258-residue polypeptide: Glutamate racemase (258 aa).

Substrate is bound by residues 11 to 12 (DS) and 43 to 44 (YG). The active-site Proton donor/acceptor is Cys74. Position 75-76 (75-76 (NT)) interacts with substrate. Cys182 acts as the Proton donor/acceptor in catalysis. 183-184 (TH) serves as a coordination point for substrate.

It belongs to the aspartate/glutamate racemases family.

The enzyme catalyses L-glutamate = D-glutamate. It participates in cell wall biogenesis; peptidoglycan biosynthesis. Functionally, provides the (R)-glutamate required for cell wall biosynthesis. The polypeptide is Glutamate racemase (Leptospira borgpetersenii serovar Hardjo-bovis (strain JB197)).